We begin with the raw amino-acid sequence, 64 residues long: MPKLKTRKAALKRYKKTATGKFLRRHAYKGHLLMKKSKTQKRKLSQIICVSNNDSKPIKLMLPY.

This sequence belongs to the bacterial ribosomal protein bL35 family.

Its subcellular location is the plastid. It is found in the chloroplast. The polypeptide is Large ribosomal subunit protein bL35c (Trieres chinensis (Marine centric diatom)).